We begin with the raw amino-acid sequence, 672 residues long: Acetoacetyl-CoA synthetase (672 aa).

It belongs to the ATP-dependent AMP-binding enzyme family.

It is found in the cytoplasm. The protein localises to the cytosol. It carries out the reaction acetoacetate + ATP + CoA = acetoacetyl-CoA + AMP + diphosphate. Its function is as follows. Converts acetoacetate to acetoacetyl-CoA in the cytosol. Ketone body-utilizing enzyme, responsible for the synthesis of cholesterol and fatty acids. This Mus musculus (Mouse) protein is Acetoacetyl-CoA synthetase (Aacs).